The sequence spans 369 residues: 3-dehydroquinate synthase (369 aa).

NAD(+) is bound by residues 110–114, 134–135, lysine 147, lysine 156, and 174–177; these read GVIGD, TT, and TLKT. Glutamate 189, histidine 254, and histidine 271 together coordinate Zn(2+).

It belongs to the sugar phosphate cyclases superfamily. Dehydroquinate synthase family. It depends on Co(2+) as a cofactor. The cofactor is Zn(2+). Requires NAD(+) as cofactor.

It localises to the cytoplasm. It catalyses the reaction 7-phospho-2-dehydro-3-deoxy-D-arabino-heptonate = 3-dehydroquinate + phosphate. The protein operates within metabolic intermediate biosynthesis; chorismate biosynthesis; chorismate from D-erythrose 4-phosphate and phosphoenolpyruvate: step 2/7. In terms of biological role, catalyzes the conversion of 3-deoxy-D-arabino-heptulosonate 7-phosphate (DAHP) to dehydroquinate (DHQ). The protein is 3-dehydroquinate synthase of Cyanothece sp. (strain PCC 7425 / ATCC 29141).